The primary structure comprises 291 residues: Bis(5'-nucleosyl)-tetraphosphatase, symmetrical (291 aa).

It belongs to the Ap4A hydrolase family.

It carries out the reaction P(1),P(4)-bis(5'-adenosyl) tetraphosphate + H2O = 2 ADP + 2 H(+). Its function is as follows. Hydrolyzes diadenosine 5',5'''-P1,P4-tetraphosphate to yield ADP. This chain is Bis(5'-nucleosyl)-tetraphosphatase, symmetrical, found in Coxiella burnetii (strain CbuK_Q154) (Coxiella burnetii (strain Q154)).